The sequence spans 241 residues: Leucyl/phenylalanyl-tRNA--protein transferase (241 aa).

The protein belongs to the L/F-transferase family.

It is found in the cytoplasm. The catalysed reaction is N-terminal L-lysyl-[protein] + L-leucyl-tRNA(Leu) = N-terminal L-leucyl-L-lysyl-[protein] + tRNA(Leu) + H(+). It catalyses the reaction N-terminal L-arginyl-[protein] + L-leucyl-tRNA(Leu) = N-terminal L-leucyl-L-arginyl-[protein] + tRNA(Leu) + H(+). It carries out the reaction L-phenylalanyl-tRNA(Phe) + an N-terminal L-alpha-aminoacyl-[protein] = an N-terminal L-phenylalanyl-L-alpha-aminoacyl-[protein] + tRNA(Phe). Its function is as follows. Functions in the N-end rule pathway of protein degradation where it conjugates Leu, Phe and, less efficiently, Met from aminoacyl-tRNAs to the N-termini of proteins containing an N-terminal arginine or lysine. In Neisseria meningitidis serogroup B (strain ATCC BAA-335 / MC58), this protein is Leucyl/phenylalanyl-tRNA--protein transferase.